Consider the following 162-residue polypeptide: MSSNLCPIYSSFFGFAGVCASMVFSCLGAGYGTALAGRGIAAVGAFRPEIVMKSLIPVVMSGIIGVYGLVMSVLIAGDMSPDNDYSLFSGFIHLSAGLAVGLTGVAAGYAIGVVGDRGVQSFMRQDRIFVSMVLILIFAEVLGLYGLIVGLILQTKTSNVCY.

The Lumenal segment spans residues 1–11 (MSSNLCPIYSS). Residues 12–32 (FFGFAGVCASMVFSCLGAGYG) form a helical membrane-spanning segment. At 33-54 (TALAGRGIAAVGAFRPEIVMKS) the chain is on the cytoplasmic side. Residues 55-75 (LIPVVMSGIIGVYGLVMSVLI) traverse the membrane as a helical segment. Topologically, residues 76–93 (AGDMSPDNDYSLFSGFIH) are lumenal. A helical membrane pass occupies residues 94–114 (LSAGLAVGLTGVAAGYAIGVV). Residues 115–132 (GDRGVQSFMRQDRIFVSM) lie on the Cytoplasmic side of the membrane. Residues 133–153 (VLILIFAEVLGLYGLIVGLIL) traverse the membrane as a helical segment. Over 154 to 162 (QTKTSNVCY) the chain is Lumenal.

Belongs to the V-ATPase proteolipid subunit family. In terms of assembly, V-ATPase is a heteromultimeric enzyme composed of a peripheral catalytic V1 complex (components A to H) attached to an integral membrane V0 proton pore complex (components: a, c, c', c'', d, e, f and VOA1). The decameric c-ring forms the proton-conducting pore, and is composed of eight proteolipid subunits c, one subunit c' and one subunit c''.

Its subcellular location is the vacuole membrane. Functionally, proton-conducting pore forming subunit of the V0 complex of vacuolar(H+)-ATPase (V-ATPase), a multisubunit enzyme composed of a peripheral complex (V1) that hydrolyzes ATP and a membrane integral complex (V0) that translocates protons. V-ATPase is responsible for acidifying and maintaining the pH of intracellular compartments. In Schizosaccharomyces pombe (strain 972 / ATCC 24843) (Fission yeast), this protein is V-type proton ATPase subunit c'.